The chain runs to 87 residues: Transcriptional regulator PINT87aa (87 aa).

As to quaternary structure, interacts with PAF1 complex member PAF1. Interacts with transcription factor FOXM1. Expressed in brain, liver, kidney and stomach with lower levels in breast, intestine, thyroid and pancreas.

It localises to the nucleus. Its function is as follows. Enhances the binding of the PAF1 complex to target gene promoters and plays a role in negative regulation of transcription. May function as an anchor to keep the PAF1 complex on target gene promoters, sequentially pausing RNA polymerase II-induced mRNA elongation. Inhibits FOXM1-mediated transcription of PHB2. The protein is Transcriptional regulator PINT87aa of Homo sapiens (Human).